The sequence spans 916 residues: Protein translocase subunit SecA (916 aa).

Residues Gln87, 105 to 109 (GEGKT), and Asp507 each bind ATP. Positions 900, 902, 911, and 912 each coordinate Zn(2+).

This sequence belongs to the SecA family. In terms of assembly, monomer and homodimer. Part of the essential Sec protein translocation apparatus which comprises SecA, SecYEG and auxiliary proteins SecDF-YajC and YidC. Requires Zn(2+) as cofactor.

It localises to the cell inner membrane. It is found in the cytoplasm. It catalyses the reaction ATP + H2O + cellular proteinSide 1 = ADP + phosphate + cellular proteinSide 2.. Part of the Sec protein translocase complex. Interacts with the SecYEG preprotein conducting channel. Has a central role in coupling the hydrolysis of ATP to the transfer of proteins into and across the cell membrane, serving both as a receptor for the preprotein-SecB complex and as an ATP-driven molecular motor driving the stepwise translocation of polypeptide chains across the membrane. The chain is Protein translocase subunit SecA from Neisseria gonorrhoeae (strain ATCC 700825 / FA 1090).